The primary structure comprises 57 residues: Phosphatase RapH inhibitor (57 aa).

2 propeptides span residues 1 to 34 (MPIK…FKES) and 41 to 57 (YIDH…KALS). Positions 26-57 (TNSGGFKESTDRNTTYIDHSPYKLSDQKKALS) are disordered.

The protein belongs to the Phr family. In terms of processing, contains a predicted signal peptide cleavage site in the N-terminal region, however the propeptide is probably only subject to processing events at the ends of the mature peptide.

It localises to the secreted. The protein localises to the cytoplasm. In terms of biological role, signaling molecule involved the regulation of both sporulation and competence. Secreted during production, but the mature peptide acts intracellularly, indicating that it needs to be imported into the cell to function. Acts by inhibiting RapH activity. Can inhibit both RapH activities, the dephosphorylation of Spo0F and the sequestration of ComA. The sequence is that of Phosphatase RapH inhibitor (phrH) from Bacillus subtilis (strain 168).